A 63-amino-acid chain; its full sequence is Arabinogalactan protein 22 (63 aa).

Positions 1 to 27 are cleaved as a signal peptide; sequence MASLKFPLEILAVFVIISVILLPIAQS. A 4-hydroxyproline mark is found at Pro32, Pro34, and Pro36. O-linked (Ara...) hydroxyproline glycans are attached at residues Pro32, Pro34, and Pro36. Ser38 is lipidated: GPI-anchor amidated serine. Positions 39–63 are cleaved as a propeptide — removed in mature form; it reads DGTSIDQGIAYVLMMVALALTYFIH.

The protein belongs to the AG-peptide AGP family. Contains 4-hydroxyproline; hydroxylated on Pro-32, Pro-34 and Pro-36. Post-translationally, O-glycosylated on hydroxyprolines; noncontiguous hydroxylproline residues are glycosylated with arabinogalactan.

Its subcellular location is the cell membrane. Its function is as follows. Proteoglycan that seems to be implicated in diverse developmental roles such as differentiation, cell-cell recognition, embryogenesis and programmed cell death. The sequence is that of Arabinogalactan protein 22 from Arabidopsis thaliana (Mouse-ear cress).